A 326-amino-acid chain; its full sequence is Apoptosis facilitator Bcl-2-like protein 14 (326 aa).

A Phosphoserine modification is found at S44. The disordered stretch occupies residues T99–Q127. Positions I211 to E225 match the BH3 motif. The BH2 motif lies at W307–W314.

It belongs to the Bcl-2 family. In terms of processing, phosphorylated by MELK, leading to inhibit its pro-apoptotic function.

Its subcellular location is the cytoplasm. Plays a role in apoptosis. The sequence is that of Apoptosis facilitator Bcl-2-like protein 14 (Bcl2l14) from Rattus norvegicus (Rat).